We begin with the raw amino-acid sequence, 198 residues long: Recombination protein RecR (198 aa).

Residues 57-72 form a C4-type zinc finger; the sequence is CSVCGHITENDPCYIC. In terms of domain architecture, Toprim spans 80-175; sequence SVICVVEDDK…KVTRLAQGLS (96 aa).

It belongs to the RecR family.

May play a role in DNA repair. It seems to be involved in an RecBC-independent recombinational process of DNA repair. It may act with RecF and RecO. The polypeptide is Recombination protein RecR (Staphylococcus haemolyticus (strain JCSC1435)).